A 233-amino-acid polypeptide reads, in one-letter code: Hydroxyacylglutathione hydrolase (233 aa).

The Zn(2+) site is built by His-52, His-54, Asp-56, His-57, His-108, Asp-125, and His-163.

This sequence belongs to the metallo-beta-lactamase superfamily. Glyoxalase II family. Monomer. The cofactor is Zn(2+).

The catalysed reaction is an S-(2-hydroxyacyl)glutathione + H2O = a 2-hydroxy carboxylate + glutathione + H(+). The protein operates within secondary metabolite metabolism; methylglyoxal degradation; (R)-lactate from methylglyoxal: step 2/2. Functionally, thiolesterase that catalyzes the hydrolysis of S-D-lactoyl-glutathione to form glutathione and D-lactic acid. The protein is Hydroxyacylglutathione hydrolase of Histophilus somni (strain 129Pt) (Haemophilus somnus).